The primary structure comprises 206 residues: Large ribosomal subunit protein uL4 (206 aa).

Positions 42-93 are disordered; the sequence is KKQQGTHKTKNRSEVSRTGAKMYKQKGTGRARHHSARAPQFRGGGKAHGPVV. The segment covering 64-77 has biased composition (basic residues); the sequence is YKQKGTGRARHHSA.

It belongs to the universal ribosomal protein uL4 family. Part of the 50S ribosomal subunit.

One of the primary rRNA binding proteins, this protein initially binds near the 5'-end of the 23S rRNA. It is important during the early stages of 50S assembly. It makes multiple contacts with different domains of the 23S rRNA in the assembled 50S subunit and ribosome. Functionally, forms part of the polypeptide exit tunnel. This chain is Large ribosomal subunit protein uL4, found in Agrobacterium fabrum (strain C58 / ATCC 33970) (Agrobacterium tumefaciens (strain C58)).